Consider the following 149-residue polypeptide: Large ribosomal subunit protein uL22 (149 aa).

It belongs to the universal ribosomal protein uL22 family. Part of the 50S ribosomal subunit.

In terms of biological role, this protein binds specifically to 23S rRNA; its binding is stimulated by other ribosomal proteins, e.g. L4, L17, and L20. It is important during the early stages of 50S assembly. It makes multiple contacts with different domains of the 23S rRNA in the assembled 50S subunit and ribosome. The globular domain of the protein is located near the polypeptide exit tunnel on the outside of the subunit, while an extended beta-hairpin is found that lines the wall of the exit tunnel in the center of the 70S ribosome. The polypeptide is Large ribosomal subunit protein uL22 (Petrotoga mobilis (strain DSM 10674 / SJ95)).